Here is a 278-residue protein sequence, read N- to C-terminus: Undecaprenyl-diphosphatase (278 aa).

Transmembrane regions (helical) follow at residues 14 to 34, 40 to 60, 89 to 109, 121 to 141, 153 to 173, 196 to 216, 227 to 247, and 257 to 277; these read GTTE…PWLF, GLAF…AYFW, WAVI…NDVI, TAIV…WLAE, LGLR…LPGV, FSFI…TLKL, VLFV…IAFL, and SIFI…VSFA.

The protein belongs to the UppP family.

The protein localises to the cell membrane. It carries out the reaction di-trans,octa-cis-undecaprenyl diphosphate + H2O = di-trans,octa-cis-undecaprenyl phosphate + phosphate + H(+). In terms of biological role, catalyzes the dephosphorylation of undecaprenyl diphosphate (UPP). Confers resistance to bacitracin. This chain is Undecaprenyl-diphosphatase, found in Thermomicrobium roseum (strain ATCC 27502 / DSM 5159 / P-2).